Consider the following 396-residue polypeptide: Succinyl-CoA:mesaconate CoA-transferase (396 aa).

Residue D175 is the Nucleophile of the active site.

It belongs to the CoA-transferase III family. Homodimer.

The enzyme catalyses mesaconate + succinyl-CoA = 2-methylfumaryl-CoA + succinate. With respect to regulation, shows highest activity at 4 M KCl. Does not require divalent ions for activity. Functionally, involved in the methylaspartate cycle. Catalyzes the transfer of the CoA moiety from succinyl-CoA to mesaconate to generate mesaconyl-CoA (2-methylfumaryl-CoA) and succinate. Also shows high activity with methylsuccinate as CoA-acceptor, and only low activity with glutarate, acrylate and itaconate. Cannot use other CoA donors like acetyl-CoA, propionyl-CoA, butyryl-CoA or acetoacetyl-CoA. This is Succinyl-CoA:mesaconate CoA-transferase from Haloarcula hispanica (strain ATCC 33960 / DSM 4426 / JCM 8911 / NBRC 102182 / NCIMB 2187 / VKM B-1755).